The chain runs to 242 residues: Biosynthetic peptidoglycan transglycosylase (242 aa).

A helical transmembrane segment spans residues 19-39; the sequence is LMVVLAIFWGGGIALFSVAPV.

This sequence belongs to the glycosyltransferase 51 family.

It localises to the cell inner membrane. The catalysed reaction is [GlcNAc-(1-&gt;4)-Mur2Ac(oyl-L-Ala-gamma-D-Glu-L-Lys-D-Ala-D-Ala)](n)-di-trans,octa-cis-undecaprenyl diphosphate + beta-D-GlcNAc-(1-&gt;4)-Mur2Ac(oyl-L-Ala-gamma-D-Glu-L-Lys-D-Ala-D-Ala)-di-trans,octa-cis-undecaprenyl diphosphate = [GlcNAc-(1-&gt;4)-Mur2Ac(oyl-L-Ala-gamma-D-Glu-L-Lys-D-Ala-D-Ala)](n+1)-di-trans,octa-cis-undecaprenyl diphosphate + di-trans,octa-cis-undecaprenyl diphosphate + H(+). It functions in the pathway cell wall biogenesis; peptidoglycan biosynthesis. Peptidoglycan polymerase that catalyzes glycan chain elongation from lipid-linked precursors. This is Biosynthetic peptidoglycan transglycosylase from Escherichia coli O127:H6 (strain E2348/69 / EPEC).